We begin with the raw amino-acid sequence, 344 residues long: Ribosomal RNA large subunit methyltransferase Cfr (344 aa).

The Proton acceptor role is filled by E90. The region spanning 97 to 330 (KQGWESFCIS…ATVRTQFGSE (234 aa)) is the Radical SAM core domain. A disulfide bond links C104 and C335. Residues C111, C115, and C118 each coordinate [4Fe-4S] cluster. S-adenosyl-L-methionine contacts are provided by residues 157-158 (GE), S188, 211-213 (SLH), and N292. C335 acts as the S-methylcysteine intermediate in catalysis.

Belongs to the radical SAM superfamily. RlmN family. Cfr subfamily. Requires [4Fe-4S] cluster as cofactor.

It is found in the cytoplasm. It catalyses the reaction adenosine(2503) in 23S rRNA + 2 reduced [2Fe-2S]-[ferredoxin] + 2 S-adenosyl-L-methionine = 8-methyladenosine(2503) in 23S rRNA + 5'-deoxyadenosine + L-methionine + 2 oxidized [2Fe-2S]-[ferredoxin] + S-adenosyl-L-homocysteine. Functionally, specifically methylates position 8 of adenine 2503 in 23S rRNA. Confers resistance to some classes of antibiotics. The sequence is that of Ribosomal RNA large subunit methyltransferase Cfr from Clostridium botulinum (strain Hall / ATCC 3502 / NCTC 13319 / Type A).